The primary structure comprises 416 residues: Serine--tRNA ligase (416 aa).

L-serine is bound at residue 232–234; the sequence is TAE. 263–265 provides a ligand contact to ATP; that stretch reads RKE. Glu286 is a binding site for L-serine. Residue 350–353 participates in ATP binding; the sequence is EISS. Ser384 serves as a coordination point for L-serine.

Belongs to the class-II aminoacyl-tRNA synthetase family. Type-1 seryl-tRNA synthetase subfamily. Homodimer. The tRNA molecule binds across the dimer.

The protein localises to the cytoplasm. The enzyme catalyses tRNA(Ser) + L-serine + ATP = L-seryl-tRNA(Ser) + AMP + diphosphate + H(+). The catalysed reaction is tRNA(Sec) + L-serine + ATP = L-seryl-tRNA(Sec) + AMP + diphosphate + H(+). The protein operates within aminoacyl-tRNA biosynthesis; selenocysteinyl-tRNA(Sec) biosynthesis; L-seryl-tRNA(Sec) from L-serine and tRNA(Sec): step 1/1. Its function is as follows. Catalyzes the attachment of serine to tRNA(Ser). Is also able to aminoacylate tRNA(Sec) with serine, to form the misacylated tRNA L-seryl-tRNA(Sec), which will be further converted into selenocysteinyl-tRNA(Sec). The sequence is that of Serine--tRNA ligase from Nautilia profundicola (strain ATCC BAA-1463 / DSM 18972 / AmH).